Here is a 227-residue protein sequence, read N- to C-terminus: Atypical response regulator protein ChxR (227 aa).

The 103-residue stretch at 6-108 folds into the Response regulatory domain; it reads HVLLVSEHWD…ILKSAISLFL (103 aa). The ompR/PhoB-type DNA-binding region spans 117-213; that stretch reads PESIRFGPNV…LRGVGYLFSD (97 aa).

As to quaternary structure, homodimer.

May be a global positive regulator of transcription. Binds a cis-acting element of its own promoter DNA sequence and is hence probably also involved in its own transcription activation. The recognition sequence is 5'-WHGAWNH-N(3-5)-WHGAWNH-3', where W is A/T, H is C/A/T, N is G/C/A/T and the linker length in the middle is 3 to 5 nucleotides. This is Atypical response regulator protein ChxR from Chlamydia trachomatis serovar L2 (strain ATCC VR-902B / DSM 19102 / 434/Bu).